Here is a 371-residue protein sequence, read N- to C-terminus: Bifunctional enzyme IspD/IspF (371 aa).

Residues 1-212 (MKDITLVLLA…FDFTPASGTI (212 aa)) form a 2-C-methyl-D-erythritol 4-phosphate cytidylyltransferase region. Residues 213-371 (FTGNGFDVHA…NLGYFDWRKF (159 aa)) are 2-C-methyl-D-erythritol 2,4-cyclodiphosphate synthase. A divalent metal cation contacts are provided by Asp219 and His221. 4-CDP-2-C-methyl-D-erythritol 2-phosphate is bound by residues 219–221 (DVH) and 245–246 (HS). Residue His253 coordinates a divalent metal cation. 4-CDP-2-C-methyl-D-erythritol 2-phosphate contacts are provided by residues 267–269 (DIG), 272–276 (FPDTD), 341–344 (STTE), Phe348, and Arg351.

The protein in the N-terminal section; belongs to the IspD/TarI cytidylyltransferase family. IspD subfamily. This sequence in the C-terminal section; belongs to the IspF family. Requires a divalent metal cation as cofactor.

It catalyses the reaction 2-C-methyl-D-erythritol 4-phosphate + CTP + H(+) = 4-CDP-2-C-methyl-D-erythritol + diphosphate. It carries out the reaction 4-CDP-2-C-methyl-D-erythritol 2-phosphate = 2-C-methyl-D-erythritol 2,4-cyclic diphosphate + CMP. It functions in the pathway isoprenoid biosynthesis; isopentenyl diphosphate biosynthesis via DXP pathway; isopentenyl diphosphate from 1-deoxy-D-xylulose 5-phosphate: step 2/6. Its pathway is isoprenoid biosynthesis; isopentenyl diphosphate biosynthesis via DXP pathway; isopentenyl diphosphate from 1-deoxy-D-xylulose 5-phosphate: step 4/6. Functionally, bifunctional enzyme that catalyzes the formation of 4-diphosphocytidyl-2-C-methyl-D-erythritol from CTP and 2-C-methyl-D-erythritol 4-phosphate (MEP) (IspD), and catalyzes the conversion of 4-diphosphocytidyl-2-C-methyl-D-erythritol 2-phosphate (CDP-ME2P) to 2-C-methyl-D-erythritol 2,4-cyclodiphosphate (ME-CPP) with a corresponding release of cytidine 5-monophosphate (CMP) (IspF). The protein is Bifunctional enzyme IspD/IspF of Campylobacter hominis (strain ATCC BAA-381 / DSM 21671 / CCUG 45161 / LMG 19568 / NCTC 13146 / CH001A).